A 64-amino-acid chain; its full sequence is Cytochrome c oxidase subunit 5C-2 (64 aa).

The chain crosses the membrane as a helical span at residues 15 to 34 (SVVKELIIGLTLGLAAGGLW).

The protein belongs to the cytochrome c oxidase subunit 5C family.

It localises to the mitochondrion inner membrane. In terms of biological role, this protein is one of the nuclear-coded polypeptide chains of cytochrome c oxidase, the terminal oxidase in mitochondrial electron transport. The sequence is that of Cytochrome c oxidase subunit 5C-2 from Arabidopsis thaliana (Mouse-ear cress).